A 652-amino-acid chain; its full sequence is MTGEIPRGRRWSARTTRASRLNSPLRAFLHTETGSARVLLAAAVVALAWVNLDESSYESLWGAVFSVRLGSWQVSHDLRFWVNSGLMTFFFLVIGLEVRRDFDLGELRERRRLMLPLLAGIGGILAPIAIYLAFNAGKPTAVGWGVVMATDTALALGMLAVLGPRFSDRLRNFLLTVAVVDDLIVIVVLAIAYPEHPSPMALFVAAGIFALVLLIRAAGVRWGPGYLLLGVAAWLAVSESGVDPVVVGLVMGLFTYAYVPARTELQRAADRFRLFREQPSPQLARSVRAGLASALSPNDRLQHIYHPWASYLIVPLFALANVGVVVDRELLARAATSPVTLGVLFAYVVGKPAGIVIASMLVPRLSHNQFRAPVGWAAIIGVGTVSGIGFTIALLIATHALHGPALDEAKVGILVATVGASLTTWLVFRLAARLAPARRARALLGASEGIIDLMVPVDPDRDHVRGPREAPVTVVEYADFECPYCGQAEPAVRELLVDYTSVRYVWRHLPLTDVHPYAQMAAEAAEAAAEQGAFWEMHDLLLAHQDELRPADLLRYAERLDLDLDRFREHLADRRGAGRIAQDVDAADLSSVSGTPTFFVNGRRHHGPYNIEALSAAVMSAFASARLRPEGGREPDHRSEAGSEQPDEEPGT.

Residues 1 to 428 (MTGEIPRGRR…GASLTTWLVF (428 aa)) form a na(+)/H(+) antiporter NhaA region. The next 11 helical transmembrane spans lie at 32–52 (ETGS…WVNL), 78–98 (LRFW…GLEV), 114–134 (MLPL…YLAF), 142–162 (VGWG…LAVL), 173–193 (FLLT…AIAY), 200–220 (MALF…AAGV), 227–249 (LLLG…VVGL), 306–326 (HPWA…GVVV), 342–362 (GVLF…SMLV), 376–396 (WAAI…ALLI), and 411–431 (VGIL…FRLA). The Thioredoxin domain maps to 429-623 (RLAARLAPAR…LSAAVMSAFA (195 aa)). Residues 626-652 (RLRPEGGREPDHRSEAGSEQPDEEPGT) are disordered. Positions 627-641 (LRPEGGREPDHRSEA) are enriched in basic and acidic residues.

In the N-terminal section; belongs to the NhaA Na(+)/H(+) (TC 2.A.33) antiporter family.

It is found in the cell membrane. It catalyses the reaction Na(+)(in) + 2 H(+)(out) = Na(+)(out) + 2 H(+)(in). Functionally, na(+)/H(+) antiporter that extrudes sodium in exchange for external protons. This chain is Na(+)/H(+) antiporter NhaA 3, found in Salinispora tropica (strain ATCC BAA-916 / DSM 44818 / JCM 13857 / NBRC 105044 / CNB-440).